Consider the following 373-residue polypeptide: Structure-specific endonuclease subunit EME2 (373 aa).

Residues R24 to G52 form a disordered region. The interval A47 to Q260 is nuclease-like domain; forms the post-nick DNA binding interface and is involved in DNA recognition and bending. Residues G282–S373 form a helix-hairpin-helix (2HhH); forms the pre-nick DNA binding interface and is involved in DNA recognition and bending region.

The protein belongs to the EME1/MMS4 family. In terms of assembly, part of the heterodimeric MUS81-EME2 complex; the complex forms specifically during the DNA replication phase of the cell cycle.

It is found in the nucleus. Functionally, non-catalytic subunit of the structure-specific, heterodimeric DNA endonuclease MUS81-EME2 which is involved in the maintenance of genome stability. In the complex, EME2 is required for DNA cleavage, participating in DNA recognition and bending. MUS81-EME2 cleaves 3'-flaps and nicked Holliday junctions, and exhibit limited endonuclease activity with 5' flaps and nicked double-stranded DNAs. MUS81-EME2 which is active during the replication of DNA is more specifically involved in replication fork processing. Replication forks frequently encounter obstacles to their passage, including DNA base lesions, DNA interstrand cross-links, difficult-to-replicate sequences, transcription bubbles, or tightly bound proteins. One mechanism for the restart of a stalled replication fork involves nucleolytic cleavage mediated by the MUS81-EME2 endonuclease. By acting upon the stalled fork, MUS81-EME2 generates a DNA double-strand break (DSB) that can be repaired by homologous recombination, leading to the restoration of an active fork. MUS81-EME2 could also function in telomere maintenance. The sequence is that of Structure-specific endonuclease subunit EME2 from Mus musculus (Mouse).